The primary structure comprises 212 residues: Kynurenine formamidase (212 aa).

Trp-18 is a binding site for substrate. Zn(2+) contacts are provided by His-48, His-52, and Asp-54. His-58 functions as the Proton donor/acceptor in the catalytic mechanism. Zn(2+) is bound by residues His-160 and Glu-172.

Belongs to the Cyclase 1 superfamily. KynB family. Homodimer. It depends on Zn(2+) as a cofactor.

The catalysed reaction is N-formyl-L-kynurenine + H2O = L-kynurenine + formate + H(+). Its pathway is amino-acid degradation; L-tryptophan degradation via kynurenine pathway; L-kynurenine from L-tryptophan: step 2/2. Catalyzes the hydrolysis of N-formyl-L-kynurenine to L-kynurenine, the second step in the kynurenine pathway of tryptophan degradation. The polypeptide is Kynurenine formamidase (Paraburkholderia xenovorans (strain LB400)).